We begin with the raw amino-acid sequence, 258 residues long: Eukaryotic translation initiation factor 3 subunit J (258 aa).

The segment covering methionine 1–serine 11 has biased composition (low complexity). The tract at residues methionine 1–leucine 108 is disordered. N-acetylalanine is present on alanine 2. Residues alanine 2–valine 69 form a sufficient for interaction with EIF3B region. Phosphoserine occurs at positions 11, 13, and 20. Acidic residues predominate over residues glutamate 40–lysine 59. Basic and acidic residues predominate over residues lysine 60–lysine 106. Residues lysine 70–threonine 135 are a coiled coil. Lysine 106 participates in a covalent cross-link: Glycyl lysine isopeptide (Lys-Gly) (interchain with G-Cter in SUMO2). Threonine 109 carries the phosphothreonine modification. At serine 127 the chain carries Phosphoserine. The interval serine 217–aspartate 238 is disordered. Residues tyrosine 243 to methionine 258 form a promotes stable association with the 40S ribosome region. Residue tyrosine 254 is modified to Phosphotyrosine.

As to quaternary structure, component of the eukaryotic translation initiation factor 3 (eIF-3) complex, which is composed of 13 subunits: EIF3A, EIF3B, EIF3C, EIF3D, EIF3E, EIF3F, EIF3G, EIF3H, EIF3I, EIF3J, EIF3K, EIF3L and EIF3M. The eIF-3 complex appears to include 3 stable modules: module A is composed of EIF3A, EIF3B, EIF3G and EIF3I; module B is composed of EIF3F, EIF3H, and EIF3M; and module C is composed of EIF3C, EIF3D, EIF3E, EIF3K and EIF3L. EIF3C of module C binds EIF3B of module A and EIF3H of module B, thereby linking the three modules. EIF3J is a labile subunit that binds to the eIF-3 complex via EIF3B. The eIF-3 complex interacts with RPS6KB1 under conditions of nutrient depletion. Mitogenic stimulation leads to binding and activation of a complex composed of MTOR and RPTOR, leading to phosphorylation and release of RPS6KB1 and binding of EIF4B to eIF-3. Phosphorylated. Phosphorylation is enhanced upon serum stimulation.

It is found in the cytoplasm. Component of the eukaryotic translation initiation factor 3 (eIF-3) complex, which is required for several steps in the initiation of protein synthesis. The eIF-3 complex associates with the 40S ribosome and facilitates the recruitment of eIF-1, eIF-1A, eIF-2:GTP:methionyl-tRNAi and eIF-5 to form the 43S pre-initiation complex (43S PIC). The eIF-3 complex stimulates mRNA recruitment to the 43S PIC and scanning of the mRNA for AUG recognition. The eIF-3 complex is also required for disassembly and recycling of post-termination ribosomal complexes and subsequently prevents premature joining of the 40S and 60S ribosomal subunits prior to initiation. The eIF-3 complex specifically targets and initiates translation of a subset of mRNAs involved in cell proliferation, including cell cycling, differentiation and apoptosis, and uses different modes of RNA stem-loop binding to exert either translational activation or repression. The protein is Eukaryotic translation initiation factor 3 subunit J of Homo sapiens (Human).